A 221-amino-acid polypeptide reads, in one-letter code: Eukaryotic translation initiation factor 3 subunit K (221 aa).

In terms of domain architecture, PCI spans 46-207 (YDLEANLACL…NIKTKHITEK (162 aa)).

The protein belongs to the eIF-3 subunit K family. As to quaternary structure, component of the eukaryotic translation initiation factor 3 (eIF-3) complex.

Its subcellular location is the cytoplasm. Functionally, component of the eukaryotic translation initiation factor 3 (eIF-3) complex, which is involved in protein synthesis of a specialized repertoire of mRNAs and, together with other initiation factors, stimulates binding of mRNA and methionyl-tRNAi to the 40S ribosome. The eIF-3 complex specifically targets and initiates translation of a subset of mRNAs involved in cell proliferation. The chain is Eukaryotic translation initiation factor 3 subunit K from Culex quinquefasciatus (Southern house mosquito).